The sequence spans 118 residues: Small ribosomal subunit protein uS13 (118 aa).

The tract at residues 91–118 (HRRSLPVRGQRTKTNARTRKGPRKPIKA) is disordered.

This sequence belongs to the universal ribosomal protein uS13 family. Part of the 30S ribosomal subunit. Forms a loose heterodimer with protein S19. Forms two bridges to the 50S subunit in the 70S ribosome.

Functionally, located at the top of the head of the 30S subunit, it contacts several helices of the 16S rRNA. In the 70S ribosome it contacts the 23S rRNA (bridge B1a) and protein L5 of the 50S subunit (bridge B1b), connecting the 2 subunits; these bridges are implicated in subunit movement. Contacts the tRNAs in the A and P-sites. The protein is Small ribosomal subunit protein uS13 of Francisella philomiragia subsp. philomiragia (strain ATCC 25017 / CCUG 19701 / FSC 153 / O#319-036).